A 365-amino-acid chain; its full sequence is 3-dehydroquinate synthase (365 aa).

Residues 69-74 (DGEKYK), 103-107 (GVIGD), 127-128 (TT), K140, and K149 each bind NAD(+). Positions 182, 245, and 262 each coordinate Zn(2+).

Belongs to the sugar phosphate cyclases superfamily. Dehydroquinate synthase family. Requires Co(2+) as cofactor. The cofactor is Zn(2+). NAD(+) is required as a cofactor.

The protein resides in the cytoplasm. It catalyses the reaction 7-phospho-2-dehydro-3-deoxy-D-arabino-heptonate = 3-dehydroquinate + phosphate. It functions in the pathway metabolic intermediate biosynthesis; chorismate biosynthesis; chorismate from D-erythrose 4-phosphate and phosphoenolpyruvate: step 2/7. In terms of biological role, catalyzes the conversion of 3-deoxy-D-arabino-heptulosonate 7-phosphate (DAHP) to dehydroquinate (DHQ). The sequence is that of 3-dehydroquinate synthase from Pseudomonas entomophila (strain L48).